A 670-amino-acid polypeptide reads, in one-letter code: RxLR effector protein PSR2 (670 aa).

The signal sequence occupies residues 1–17; the sequence is MRLQCVVLFAALTLVAA. The RxLR-dEER signature appears at 39-54; the sequence is RLLRPGNPAGKEDEER. Residue Asn-57 is glycosylated (N-linked (GlcNAc...) asparagine). The WY1 repeat unit spans residues 79-126; that stretch reads KLLKWADAKKPPETVFTRLRLDKTGTQLFDNTDFPVWAAYTRSVAQTD. Residues 79 to 670 are 7 X 93 AA tandem repeats; sequence KLLKWADAKK…YSAKFKVRWG (592 aa). An LWY2 repeat occupies 127–217; that stretch reads SEASAVMLKT…NYMKLSNKEN (91 aa). An LWY3 repeat occupies 218 to 308; that stretch reads PKAQTTLIAT…KYINYYNKEN (91 aa). An LWY4 repeat occupies 309 to 399; that stretch reads PDEKTTVLAK…KYTENFNLNK (91 aa). One copy of the LWY5 repeat lies at 400 to 492; the sequence is EINEQVTAIQ…KFLEKYNTAN (93 aa). An LWY6 repeat occupies 493–583; it reads PGKEQTMISG…KYLNAFNDKA (91 aa). Residues 584 to 670 form an LWY7 repeat; that stretch reads PVKKALMIDT…YSAKFKVRWG (87 aa).

Belongs to the RxLR effector family. As to quaternary structure, interacts with host dsRNA-binding protein DRB4.

The protein resides in the secreted. It localises to the host cell. Functionally, secreted effector that possesses RNA silencing suppression activity by inhibiting the biogenesis of small RNAs in the host plant to promote enhanced susceptibility of host to the pathogen during infection. Interferes with secondary siRNA production by associating with host dsRNA-binding protein DRB4. Inhibits the host salicylic acid pathway during infection. This chain is RxLR effector protein PSR2, found in Phytophthora sojae (Soybean stem and root rot agent).